An 848-amino-acid chain; its full sequence is Beta-galactosidase 11 (848 aa).

The signal sequence occupies residues 1–23 (MSAAAVLAVVAAAVAALAAAASG). Residue Asn-29 is glycosylated (N-linked (GlcNAc...) asparagine). The Proton donor role is filled by Glu-189. Residue Glu-260 is the Nucleophile of the active site. 3 N-linked (GlcNAc...) asparagine glycosylation sites follow: Asn-261, Asn-472, and Asn-783. Residues 750-837 (GGLKPTAVLS…GTLAVQAKCS (88 aa)) enclose the SUEL-type lectin domain.

The protein belongs to the glycosyl hydrolase 35 family.

It is found in the secreted. Its subcellular location is the extracellular space. The protein localises to the apoplast. It catalyses the reaction Hydrolysis of terminal non-reducing beta-D-galactose residues in beta-D-galactosides.. This Oryza sativa subsp. japonica (Rice) protein is Beta-galactosidase 11.